Consider the following 946-residue polypeptide: Probable outer membrane protein pmp18 (946 aa).

The signal sequence occupies residues 1 to 16; the sequence is MQNNRSLSKSSFFVGA. The 279-residue stretch at 668 to 946 folds into the Autotransporter domain; the sequence is QGQIAPTASG…YLHAGTTFKF (279 aa).

Belongs to the PMP outer membrane protein family.

The protein resides in the secreted. It localises to the cell wall. It is found in the cell outer membrane. The polypeptide is Probable outer membrane protein pmp18 (pmp18) (Chlamydia pneumoniae (Chlamydophila pneumoniae)).